The sequence spans 366 residues: Ribosomal RNA large subunit methyltransferase M (366 aa).

Residues Ser-188, 221 to 224 (CPGG), Asp-240, Asp-260, and Asp-277 contribute to the S-adenosyl-L-methionine site. Residue Lys-306 is the Proton acceptor of the active site.

The protein belongs to the class I-like SAM-binding methyltransferase superfamily. RNA methyltransferase RlmE family. RlmM subfamily. As to quaternary structure, monomer.

It is found in the cytoplasm. It catalyses the reaction cytidine(2498) in 23S rRNA + S-adenosyl-L-methionine = 2'-O-methylcytidine(2498) in 23S rRNA + S-adenosyl-L-homocysteine + H(+). Catalyzes the 2'-O-methylation at nucleotide C2498 in 23S rRNA. The protein is Ribosomal RNA large subunit methyltransferase M of Escherichia fergusonii (strain ATCC 35469 / DSM 13698 / CCUG 18766 / IAM 14443 / JCM 21226 / LMG 7866 / NBRC 102419 / NCTC 12128 / CDC 0568-73).